We begin with the raw amino-acid sequence, 515 residues long: Maturase K (515 aa).

It belongs to the intron maturase 2 family. MatK subfamily.

Its subcellular location is the plastid. The protein localises to the chloroplast. Its function is as follows. Usually encoded in the trnK tRNA gene intron. Probably assists in splicing its own and other chloroplast group II introns. This Alpinia calcarata (Snap ginger) protein is Maturase K.